Reading from the N-terminus, the 183-residue chain is Large ribosomal subunit protein uL6 (183 aa).

It belongs to the universal ribosomal protein uL6 family. As to quaternary structure, part of the 50S ribosomal subunit.

In terms of biological role, this protein binds to the 23S rRNA, and is important in its secondary structure. It is located near the subunit interface in the base of the L7/L12 stalk, and near the tRNA binding site of the peptidyltransferase center. This chain is Large ribosomal subunit protein uL6, found in Chlamydia trachomatis serovar D (strain ATCC VR-885 / DSM 19411 / UW-3/Cx).